Consider the following 854-residue polypeptide: pH-response regulator protein palA/prr-1 (854 aa).

The BRO1 domain occupies 5 to 402 (HVLSLPFRKS…SELESMTSQL (398 aa)). A coiled-coil region spans residues 632-699 (RLDRLYESEL…DAAYYKYKEI (68 aa)). Disordered stretches follow at residues 739-782 (EEEI…EPIQ) and 801-854 (PQQQ…IRFG). A compositionally biased stretch (polar residues) spans 746-759 (PLSSLNMHQSSFSY). Positions 767–782 (QPPPPPPQIPFPEPIQ) are enriched in pro residues. Low complexity predominate over residues 827-839 (QGQQHQQEQGQPG).

It belongs to the palA/RIM20 family. Interacts with pacc-1 by binding to its two YPX[LI] motifs.

Functionally, required for the proteolytic cleavage of the transcription factor pacc-1 in response to alkaline ambient pH. May act as a scaffold protein that recruits the calpain-like protease palB/cpr-8 via snf7/vps-3 to its substrate pacc-1. The chain is pH-response regulator protein palA/prr-1 (prr-1) from Neurospora crassa (strain ATCC 24698 / 74-OR23-1A / CBS 708.71 / DSM 1257 / FGSC 987).